The following is a 388-amino-acid chain: (S)-8-oxocitronellyl enol synthase ISY1 (388 aa).

NADP(+) is bound by residues 35-37 (TGI), 63-64 (RR), 81-82 (DV), 105-106 (TW), and Gln143. Catalysis depends on residues Lys147 and Tyr178. NADP(+) contacts are provided by residues Tyr178, Ile205, and 212-214 (SMM).

This sequence belongs to the short-chain dehydrogenases/reductases (SDR) family.

The catalysed reaction is (S)-8-oxocitronellyl enol + NADP(+) = (6E)-8-oxogeranial + NADPH + H(+). The enzyme catalyses (S)-8-oxocitronellyl enol + NAD(+) = (6E)-8-oxogeranial + NADH + H(+). Functionally, iridoid synthase that catalyzes the first step in generation of the iridoid ring scaffold using the linear monoterpene (6E)-8-oxogeranial as substrate. Iridoids comprise a large family of distinctive bicyclic monoterpenes that possess a wide range of pharmacological activities, including anticancer, anti-inflammatory, antifungal and antibacterial activities. Catalyzes the conversion of the linear monoterpene (6E)-8-oxogeranial to (S)-8-oxocitronellyl enol, a precursor of nepetalactones, which are metabolites that are both insect-repellent and have euphoric effect in cats. This Nepeta racemosa (Catmint) protein is (S)-8-oxocitronellyl enol synthase ISY1.